Here is a 1032-residue protein sequence, read N- to C-terminus: Probable ATP-dependent RNA helicase DDX46 (1032 aa).

Basic residues predominate over residues 1–24 (MGRESRHYRKRSASRGRSGSRSRS). The interval 1 to 227 (MGRESRHYRK…TEMEDEELDP (227 aa)) is disordered. Glycine 2 is lipidated: N-myristoyl glycine. Basic and acidic residues predominate over residues 26-49 (SPSDKRSKRGDDRRSRSRDRDRRR). 2 stretches are compositionally biased toward basic residues: residues 50 to 73 (ERSR…RSRS) and 81 to 103 (ERRR…RRSR). The segment covering 112–200 (KKTENRSRSK…EMKQGKKWSL (89 aa)) has biased composition (basic and acidic residues). The stretch at 152–197 (DQNKLEEEMRKRKERVEKWREEQRKKAMENIGELKKEIEEMKQGKK) forms a coiled coil. Lysine 186 participates in a covalent cross-link: Glycyl lysine isopeptide (Lys-Gly) (interchain with G-Cter in SUMO2). Serine 199 carries the post-translational modification Phosphoserine. Residues 201-211 (EDDDDDEDDPA) show a composition bias toward acidic residues. At lysine 263 the chain carries N6-acetyllysine. Tyrosine 294 carries the phosphotyrosine modification. Phosphoserine occurs at positions 295 and 296. Lysine 325 participates in a covalent cross-link: Glycyl lysine isopeptide (Lys-Gly) (interchain with G-Cter in SUMO2). Serine 346 bears the Phosphoserine mark. Residues 372 to 400 (KSWVQCGISMKILNSLKKHGYEKPTPIQT) carry the Q motif motif. Residues 403-581 (IPAIMSGRDL…RRILSKPIEV (179 aa)) form the Helicase ATP-binding domain. Residue 416–423 (AKTGSGKT) coordinates ATP. The DEAD box motif lies at 529–532 (DEAD). A Helicase C-terminal domain is found at 592–753 (DVEQQVIVIE…AVPPDLEKLW (162 aa)). At lysine 776 the chain carries N6-acetyllysine. Residue lysine 779 forms a Glycyl lysine isopeptide (Lys-Gly) (interchain with G-Cter in SUMO2) linkage. Phosphoserine is present on serine 804. Lysine 904 carries the N6-acetyllysine modification. Glycyl lysine isopeptide (Lys-Gly) (interchain with G-Cter in SUMO2) cross-links involve residues lysine 908 and lysine 916. Serine 929 is modified (phosphoserine).

This sequence belongs to the DEAD box helicase family. DDX46/PRP5 subfamily. As to quaternary structure, component of the 17S U2 SnRNP complex, a ribonucleoprotein complex that contains small nuclear RNA (snRNA) U2 and a number of specific proteins. Within the 17S U2 SnRNP complex, DDX46 is part of the SF3B subcomplex, which is required for 'A' complex assembly formed by the stable binding of U2 snRNP to the branchpoint sequence in pre-mRNA. Recruited to the 17S U2 SnRNP complex following release of DDX42; DDX42 and DDX46 bind the SF3B subcomplex in a competitive manner.

It localises to the nucleus speckle. It is found in the nucleus. The protein localises to the cajal body. The enzyme catalyses ATP + H2O = ADP + phosphate + H(+). Component of the 17S U2 SnRNP complex of the spliceosome, a large ribonucleoprotein complex that removes introns from transcribed pre-mRNAs. The 17S U2 SnRNP complex (1) directly participates in early spliceosome assembly and (2) mediates recognition of the intron branch site during pre-mRNA splicing by promoting the selection of the pre-mRNA branch-site adenosine, the nucleophile for the first step of splicing. Within the 17S U2 SnRNP complex, DDX46 plays essential roles during assembly of pre-spliceosome and proofreading of the branch site. This Mus musculus (Mouse) protein is Probable ATP-dependent RNA helicase DDX46 (Ddx46).